The primary structure comprises 396 residues: Acetate kinase (396 aa).

Mg(2+) is bound at residue Asn-7. Lys-14 serves as a coordination point for ATP. Arg-88 provides a ligand contact to substrate. The active-site Proton donor/acceptor is the Asp-145. ATP-binding positions include 205 to 209 (HLGNG), 279 to 281 (DFR), and 327 to 331 (GIGEN). Position 381 (Glu-381) interacts with Mg(2+).

The protein belongs to the acetokinase family. In terms of assembly, homodimer. The cofactor is Mg(2+). Requires Mn(2+) as cofactor.

It localises to the cytoplasm. The enzyme catalyses acetate + ATP = acetyl phosphate + ADP. It participates in metabolic intermediate biosynthesis; acetyl-CoA biosynthesis; acetyl-CoA from acetate: step 1/2. In terms of biological role, catalyzes the formation of acetyl phosphate from acetate and ATP. Can also catalyze the reverse reaction. This chain is Acetate kinase, found in Campylobacter jejuni subsp. jejuni serotype O:23/36 (strain 81-176).